We begin with the raw amino-acid sequence, 105 residues long: Thioredoxin (105 aa).

Residues 1–105 form the Thioredoxin domain; the sequence is MANNVMDSSF…SLLDWINKSI (105 aa). An intrachain disulfide couples Cys-30 to Cys-33.

This sequence belongs to the thioredoxin family.

Component of the thioredoxin-thioredoxin reductase system. Participates in various redox reactions through the reversible oxidation of its active center dithiol to a disulfide and catalyzes dithiol-disulfide exchange reactions. The chain is Thioredoxin (trxA) from Rickettsia conorii (strain ATCC VR-613 / Malish 7).